Reading from the N-terminus, the 428-residue chain is Adenylosuccinate synthetase (428 aa).

GTP is bound by residues 12–18 (GDEGKGK) and 40–42 (GHT). The Proton acceptor role is filled by Asp-13. Positions 13 and 40 each coordinate Mg(2+). Residues 13–16 (DEGK), 38–41 (NAGH), Thr-130, Arg-144, Gln-225, Thr-240, and Arg-304 contribute to the IMP site. The active-site Proton donor is the His-41. Substrate is bound at residue 300–306 (VNTGRSR). GTP-binding positions include Arg-306, 332 to 334 (KID), and 414 to 416 (GVG).

It belongs to the adenylosuccinate synthetase family. As to quaternary structure, homodimer. It depends on Mg(2+) as a cofactor.

It localises to the cytoplasm. It carries out the reaction IMP + L-aspartate + GTP = N(6)-(1,2-dicarboxyethyl)-AMP + GDP + phosphate + 2 H(+). It participates in purine metabolism; AMP biosynthesis via de novo pathway; AMP from IMP: step 1/2. Plays an important role in the de novo pathway of purine nucleotide biosynthesis. Catalyzes the first committed step in the biosynthesis of AMP from IMP. This is Adenylosuccinate synthetase from Clostridium beijerinckii (strain ATCC 51743 / NCIMB 8052) (Clostridium acetobutylicum).